The sequence spans 611 residues: Elongation factor 1 alpha-like protein (611 aa).

Disordered stretches follow at residues 1–21 (MAYS…DEGE) and 105–138 (SISQ…DEKT). Ser-124 bears the Phosphoserine mark. Positions 126-138 (GERNGEEANDEKT) are enriched in basic and acidic residues. The 226-residue stretch at 165-390 (LPHLSFVVLG…LENAAFKISK (226 aa)) folds into the tr-type G domain. The tract at residues 174 to 181 (GHVDAGKS) is G1. 174 to 181 (GHVDAGKS) is a GTP binding site. A G2 region spans residues 230 to 234 (GVTVS). A G3 region spans residues 251–254 (DAPG). Residues 313–316 (NKMD) and 352–354 (SGF) each bind GTP. The segment at 313 to 316 (NKMD) is G4. The interval 352–354 (SGF) is G5.

Belongs to the TRAFAC class translation factor GTPase superfamily. Classic translation factor GTPase family. Component of the Dom34-Hbs1 complex, also named Pelota-HBS1L complex, composed of DOM34 and HBS1.

It localises to the cytoplasm. The enzyme catalyses GTP + H2O = GDP + phosphate + H(+). Functionally, GTPase component of the Dom34-Hbs1 complex, a complex that recognizes stalled ribosomes and triggers the No-Go Decay (NGD) pathway. The Dom34-Hbs1 complex recognizes ribosomes stalled at the 3' end of an mRNA and engages stalled ribosomes by destabilizing mRNA in the mRNA channel. Following ribosome-binding, the Pelota-HBS1L complex promotes the disassembly of stalled ribosomes, followed by degradation of damaged mRNAs as part of the NGD pathway. The Dom34-Hbs1 complex is also involved in non-functional rRNA decay. The sequence is that of Elongation factor 1 alpha-like protein from Saccharomyces cerevisiae (strain ATCC 204508 / S288c) (Baker's yeast).